The chain runs to 351 residues: Phosphoribosylformylglycinamidine cyclo-ligase (351 aa).

The protein belongs to the AIR synthase family.

The protein resides in the cytoplasm. The catalysed reaction is 2-formamido-N(1)-(5-O-phospho-beta-D-ribosyl)acetamidine + ATP = 5-amino-1-(5-phospho-beta-D-ribosyl)imidazole + ADP + phosphate + H(+). It functions in the pathway purine metabolism; IMP biosynthesis via de novo pathway; 5-amino-1-(5-phospho-D-ribosyl)imidazole from N(2)-formyl-N(1)-(5-phospho-D-ribosyl)glycinamide: step 2/2. This chain is Phosphoribosylformylglycinamidine cyclo-ligase, found in Synechococcus sp. (strain JA-3-3Ab) (Cyanobacteria bacterium Yellowstone A-Prime).